The primary structure comprises 136 residues: ATP synthase epsilon chain, chloroplastic (136 aa).

This sequence belongs to the ATPase epsilon chain family. F-type ATPases have 2 components, CF(1) - the catalytic core - and CF(0) - the membrane proton channel. CF(1) has five subunits: alpha(3), beta(3), gamma(1), delta(1), epsilon(1). CF(0) has three main subunits: a, b and c.

The protein resides in the plastid. The protein localises to the chloroplast thylakoid membrane. Its function is as follows. Produces ATP from ADP in the presence of a proton gradient across the membrane. This chain is ATP synthase epsilon chain, chloroplastic, found in Chaetosphaeridium globosum (Charophycean green alga).